The chain runs to 93 residues: Sec-independent protein translocase protein TatA (93 aa).

A helical transmembrane segment spans residues 1–21 (MGSLSPWHWAILAVVVILLFG). The tract at residues 45 to 93 (EMQSENKTETSALGAQSESSAANPTPVQSQRVDPPAPSEQGHSEARPAS) is disordered. Positions 53-75 (ETSALGAQSESSAANPTPVQSQR) are enriched in polar residues.

The protein belongs to the TatA/E family. In terms of assembly, the Tat system comprises two distinct complexes: a TatABC complex, containing multiple copies of TatA, TatB and TatC subunits, and a separate TatA complex, containing only TatA subunits. Substrates initially bind to the TatABC complex, which probably triggers association of the separate TatA complex to form the active translocon.

The protein resides in the cell membrane. Its function is as follows. Part of the twin-arginine translocation (Tat) system that transports large folded proteins containing a characteristic twin-arginine motif in their signal peptide across membranes. TatA could form the protein-conducting channel of the Tat system. This is Sec-independent protein translocase protein TatA from Mycolicibacterium paratuberculosis (strain ATCC BAA-968 / K-10) (Mycobacterium paratuberculosis).